A 1342-amino-acid chain; its full sequence is DNA-directed RNA polymerase subunit beta (1342 aa).

Residues K1022 and K1200 each carry the N6-acetyllysine modification.

The protein belongs to the RNA polymerase beta chain family. In terms of assembly, the RNAP catalytic core consists of 2 alpha, 1 beta, 1 beta' and 1 omega subunit. When a sigma factor is associated with the core the holoenzyme is formed, which can initiate transcription.

The catalysed reaction is RNA(n) + a ribonucleoside 5'-triphosphate = RNA(n+1) + diphosphate. DNA-dependent RNA polymerase catalyzes the transcription of DNA into RNA using the four ribonucleoside triphosphates as substrates. This is DNA-directed RNA polymerase subunit beta from Shigella dysenteriae serotype 1 (strain Sd197).